A 381-amino-acid chain; its full sequence is Sulfate adenylyltransferase (381 aa).

It belongs to the sulfate adenylyltransferase family.

The catalysed reaction is sulfate + ATP + H(+) = adenosine 5'-phosphosulfate + diphosphate. It functions in the pathway sulfur metabolism; hydrogen sulfide biosynthesis; sulfite from sulfate: step 1/3. The protein is Sulfate adenylyltransferase of Carboxydothermus hydrogenoformans (strain ATCC BAA-161 / DSM 6008 / Z-2901).